Reading from the N-terminus, the 651-residue chain is Probable potassium transport system protein Kup (651 aa).

The next 12 membrane-spanning stretches (helical) occupy residues 30 to 50 (LALA…LYSL), 71 to 91 (IISM…VIFV), 124 to 144 (LLLG…TPAI), 158 to 178 (PDAE…LFIV), 190 to 210 (FGPV…PWII), 233 to 253 (AMAF…EALY), 268 to 288 (WFGL…AMIL), 310 to 330 (LVTI…SGAF), 358 to 378 (IYIP…ILIF), 387 to 407 (AYGL…LVLA), 413 to 433 (WPMW…LSIF), and 437 to 457 (LLKI…VVII).

This sequence belongs to the HAK/KUP transporter (TC 2.A.72) family.

The protein resides in the cell membrane. The catalysed reaction is K(+)(in) + H(+)(in) = K(+)(out) + H(+)(out). Its function is as follows. Transport of potassium into the cell. Likely operates as a K(+):H(+) symporter. The chain is Probable potassium transport system protein Kup from Cutibacterium acnes (strain DSM 16379 / KPA171202) (Propionibacterium acnes).